The primary structure comprises 901 residues: Desmocollin-2 (901 aa).

Positions 1–27 are cleaved as a signal peptide; that stretch reads MEAARPSGSWNGALCRLLLLTLAILIF. The propeptide occupies 28-135; sequence ASDACKNVTL…KEKVLRRAKR (108 aa). N-linked (GlcNAc...) asparagine glycosylation is found at Asn34 and Asn166. Cadherin domains are found at residues 136-243, 244-355, 356-471, 472-579, and 580-694; these read RWAP…YPIF, TEET…LPTF, TRTS…GPEC, NPPI…FIPK, and KTVI…QLGK. Residues 136 to 694 lie on the Extracellular side of the membrane; sequence RWAPIPCSML…IGGGGVQLGK (559 aa). Residue Asn392 is glycosylated (N-linked (GlcNAc...) (complex) asparagine). 2 N-linked (GlcNAc...) asparagine glycosylation sites follow: Asn546 and Asn629. The helical transmembrane segment at 695-715 threads the bilayer; it reads WAILAILLGIALLFCILFTLV. At 716-901 the chain is on the cytoplasmic side; that stretch reads CGASGTSKQP…RTLAEACMKR (186 aa). 3 positions are modified to phosphoserine: Ser864, Ser868, and Ser873.

In terms of assembly, interacts with DSP, PKP2 and JUP. Interacts with DSG3; the interaction may limit the interaction of DSC3 with p38MAPK family members and therefore repress p38MAPK signaling activation. In terms of tissue distribution, expressed at intercalated disks in the heart, where it is colocalized with CDH2 (at protein level). Expressed in intestinal mucosal cells (at protein level).

It localises to the cell membrane. The protein resides in the cell junction. The protein localises to the desmosome. In terms of biological role, a component of desmosome cell-cell junctions which are required for positive regulation of cellular adhesion. Promotes timely incorporation of DSG2 into desmosome intercellular junctions and promotes interaction of desmosome cell junctions with intermediate filament cytokeratin, via modulation of DSP phosphorylation. Plays an important role in desmosome-mediated maintenance of intestinal epithelial cell intercellular adhesion strength and barrier function. Positively regulates wound healing of intestinal mucosa via promotion of epithelial cell migration, and also plays a role in mechanotransduction of force between intestinal epithelial cells and extracellular matrix. May contribute to epidermal cell positioning (stratification) by mediating differential adhesiveness between cells that express different isoforms. May promote p38MAPK signaling activation that facilitates keratinocyte migration. This Homo sapiens (Human) protein is Desmocollin-2.